The sequence spans 270 residues: Lipopolysaccharide core biosynthesis glycosyltransferase LpsC (270 aa).

This sequence belongs to the glycosyltransferase 2 family. WaaE/KdtX subfamily.

It functions in the pathway bacterial outer membrane biogenesis; LPS core biosynthesis. The protein is Lipopolysaccharide core biosynthesis glycosyltransferase LpsC (lpsC) of Rhizobium meliloti (strain 1021) (Ensifer meliloti).